Here is a 1220-residue protein sequence, read N- to C-terminus: Polycomb protein Sfmbt (1220 aa).

The FCS-type zinc finger occupies 322–357 (PIQKDGMAVCKRCGAIGVKHTFYTKSRRFCSMACAR). Positions 331, 334, 351, and 355 each coordinate Zn(2+). 2 disordered regions span residues 371–399 (GDQA…QSQS) and 464–483 (DATA…SYLS). Over residues 473 to 482 (EGASTPNSYL) the composition is skewed to polar residues. 4 MBT repeats span residues 536 to 647 (YDWL…LIPP), 655 to 753 (KDWK…LAAP), 761 to 871 (LAGR…VTPP), and 879 to 975 (FTWE…LEGP). Disordered regions lie at residues 976 to 1024 (PRVA…IALK) and 1050 to 1092 (NNQP…AGSG). The segment covering 991 to 1000 (KIQRKRKPKK) has biased composition (basic residues). Residues 1052–1068 (QPEEEGDEEDPDADGDG) are compositionally biased toward acidic residues. A compositionally biased stretch (polar residues) spans 1071–1082 (STSHISEQSTTQ). Residues 1083–1092 (SSSDLIAGSG) are compositionally biased toward low complexity. Residues 1140–1203 (WNVYDVSQFL…SDLIAQLKCK (64 aa)) form the SAM domain.

In terms of assembly, interacts with pho as a component of the pho-repressive complex (PhoRC).

The protein resides in the nucleus. In terms of biological role, polycomb group (PcG) protein that binds to the Polycomb response elements (PREs) found in the regulatory regions of many genes. PcG proteins act by forming multiprotein complexes, which are required to maintain the transcriptionally repressive state of homeotic genes throughout development. PcG proteins are not required to initiate repression, but to maintain it during later stages of development. They probably act via the methylation of histones, rendering chromatin heritably changed in its expressibility. Necessary but not sufficient to recruit a functional PcG repressive complex that represses target genes, suggesting that the recruitment of the distinct PRC1 complex is also required to allow a subsequent repression. This Drosophila melanogaster (Fruit fly) protein is Polycomb protein Sfmbt.